Consider the following 238-residue polypeptide: 2-C-methyl-D-erythritol 4-phosphate cytidylyltransferase (238 aa).

This sequence belongs to the IspD/TarI cytidylyltransferase family. IspD subfamily.

It carries out the reaction 2-C-methyl-D-erythritol 4-phosphate + CTP + H(+) = 4-CDP-2-C-methyl-D-erythritol + diphosphate. It functions in the pathway isoprenoid biosynthesis; isopentenyl diphosphate biosynthesis via DXP pathway; isopentenyl diphosphate from 1-deoxy-D-xylulose 5-phosphate: step 2/6. Its function is as follows. Catalyzes the formation of 4-diphosphocytidyl-2-C-methyl-D-erythritol from CTP and 2-C-methyl-D-erythritol 4-phosphate (MEP). The sequence is that of 2-C-methyl-D-erythritol 4-phosphate cytidylyltransferase from Acinetobacter baumannii (strain SDF).